We begin with the raw amino-acid sequence, 287 residues long: Cysteine-rich repeat secretory protein 58 (287 aa).

Positions Met-1–Ala-20 are cleaved as a signal peptide. The Extracellular segment spans residues Ile-21–Lys-267. Gnk2-homologous domains follow at residues Asp-28–Phe-130 and Glu-135–Ser-246. N-linked (GlcNAc...) asparagine glycans are attached at residues Asn-39, Asn-43, Asn-59, Asn-68, Asn-89, Asn-99, Asn-107, Asn-208, and Asn-245. Residues Leu-268–Leu-286 form a helical membrane-spanning segment. Val-287 is a topological domain (cytoplasmic).

The protein belongs to the cysteine-rich repeat secretory protein family.

The protein localises to the membrane. This Arabidopsis thaliana (Mouse-ear cress) protein is Cysteine-rich repeat secretory protein 58 (CRRSP58).